We begin with the raw amino-acid sequence, 305 residues long: MIKQRTLKRIVQATGVGLHTGKKVTLTLRPASANTGVIYRRTDLNPPVDFPADAKSVRDTMLCTCLVNEHDVRISTVEHLNAALAGLGIDNIIVEVDAPEIPIMDGSASPFVYLLLDAGIEELNSAKKFLRLKQAVRVEDGDKWAELAPYNGFTLDFTIDFKHPAIDASSQRYFLNFSAESFVRQISRARTFGFMRDIEYLQSRGLALGGSFDCAIVVDDYRVLNEDGLRFEDEFVRHKMLDAIGDLFMFGHNIIGAFTAFKSGHAMNNKLLQAVLARQEAWELVTFEDEAKLPLAFKAPSFVMV.

3 residues coordinate Zn(2+): histidine 79, histidine 238, and aspartate 242. Residue histidine 265 is the Proton donor of the active site.

This sequence belongs to the LpxC family. Zn(2+) serves as cofactor.

It catalyses the reaction a UDP-3-O-[(3R)-3-hydroxyacyl]-N-acetyl-alpha-D-glucosamine + H2O = a UDP-3-O-[(3R)-3-hydroxyacyl]-alpha-D-glucosamine + acetate. It functions in the pathway glycolipid biosynthesis; lipid IV(A) biosynthesis; lipid IV(A) from (3R)-3-hydroxytetradecanoyl-[acyl-carrier-protein] and UDP-N-acetyl-alpha-D-glucosamine: step 2/6. Its function is as follows. Catalyzes the hydrolysis of UDP-3-O-myristoyl-N-acetylglucosamine to form UDP-3-O-myristoylglucosamine and acetate, the committed step in lipid A biosynthesis. This chain is UDP-3-O-acyl-N-acetylglucosamine deacetylase, found in Sodalis glossinidius (strain morsitans).